Reading from the N-terminus, the 565-residue chain is Putative serine protease pcp-1 (565 aa).

The N-terminal stretch at 1–17 (MRWFLVLLLVALVSVEA) is a signal peptide. 3 N-linked (GlcNAc...) asparagine glycosylation sites follow: asparagine 69, asparagine 107, and asparagine 126. Serine 177 acts as the Charge relay system in catalysis. Asparagine 240, asparagine 244, asparagine 257, asparagine 271, asparagine 319, and asparagine 347 each carry an N-linked (GlcNAc...) asparagine glycan. Active-site charge relay system residues include aspartate 451 and histidine 479.

Belongs to the peptidase S28 family.

In Caenorhabditis elegans, this protein is Putative serine protease pcp-1 (pcp-1).